The sequence spans 378 residues: Anhydro-N-acetylmuramic acid kinase (378 aa).

23 to 30 (GTSMDGAD) provides a ligand contact to ATP.

Belongs to the anhydro-N-acetylmuramic acid kinase family.

It catalyses the reaction 1,6-anhydro-N-acetyl-beta-muramate + ATP + H2O = N-acetyl-D-muramate 6-phosphate + ADP + H(+). It functions in the pathway amino-sugar metabolism; 1,6-anhydro-N-acetylmuramate degradation. The protein operates within cell wall biogenesis; peptidoglycan recycling. Catalyzes the specific phosphorylation of 1,6-anhydro-N-acetylmuramic acid (anhMurNAc) with the simultaneous cleavage of the 1,6-anhydro ring, generating MurNAc-6-P. Is required for the utilization of anhMurNAc either imported from the medium or derived from its own cell wall murein, and thus plays a role in cell wall recycling. This chain is Anhydro-N-acetylmuramic acid kinase, found in Bordetella pertussis (strain Tohama I / ATCC BAA-589 / NCTC 13251).